The following is a 105-amino-acid chain: uncharacterized protein (105 aa).

This is an uncharacterized protein from Saccharomyces cerevisiae (strain ATCC 204508 / S288c) (Baker's yeast).